The primary structure comprises 549 residues: Solute carrier family 22 member 6 (549 aa).

The Cytoplasmic segment spans residues 1–23 (MAFNDLLLQLGGVGRFQKIQVTL). A helical transmembrane segment spans residues 24–44 (VILPLILLASHNTLQNFTAAI). The Extracellular segment spans residues 45–135 (PTHHCRPPAD…LVCSHRALRQ (91 aa)). Residues asparagine 56, asparagine 92, and asparagine 113 are each glycosylated (N-linked (GlcNAc...) asparagine). Residues 136–156 (LAQSLYMMGVLLGAMTFGCLA) traverse the membrane as a helical segment. Topologically, residues 157-164 (DRLGRRKV) are cytoplasmic. Residues 165–185 (LIFNYLQTAVSGTCAAFAPNF) traverse the membrane as a helical segment. The Extracellular segment spans residues 186–195 (PAYCAFRFLS). A helical membrane pass occupies residues 196 to 216 (GMSTAGVVLNCMTLNVEWMPI). The Cytoplasmic portion of the chain corresponds to 217 to 224 (HTRAYVGT). Residues 225-245 (LTGYVYSLGQFLLAGMAYAVP) traverse the membrane as a helical segment. The Extracellular segment spans residues 246–248 (HWR). A helical transmembrane segment spans residues 249–269 (YLQLLVSAPFFAFFIYSWFFI). Over 270-337 (ESARWYASSG…ELIRCPALRR (68 aa)) the chain is Cytoplasmic. Residues 338 to 358 (LFLCLSMLWFATSFAYYGLVM) form a helical membrane-spanning segment. Residues 359–368 (DLQGFGVSIY) are Extracellular-facing. A helical transmembrane segment spans residues 369–389 (LIQVIFGAVDLPAKLVSFLVI). The Cytoplasmic segment spans residues 390-395 (NNVGRR). The chain crosses the membrane as a helical span at residues 396–416 (PAQMASLLLAGICILINGVVP). Over 417–425 (KDKSIVRTS) the chain is Extracellular. A helical membrane pass occupies residues 426 to 446 (LAVLGKGCLASSFNCIFLYTG). The Cytoplasmic portion of the chain corresponds to 447–456 (EVYPTMIRQT). A helical transmembrane segment spans residues 457-477 (GLGMGSTLARVGSIVSPLVSM). At 478–484 (TAELYPS) the chain is on the extracellular side. The chain crosses the membrane as a helical span at residues 485–505 (VPLFIYGAVPVAASAAIALLP). At 506–549 (ETLGQPLPDTVQDVENRRRGKTRKQQEELQKQMVPLQASAQVKN) the chain is on the cytoplasmic side. A disordered region spans residues 521–549 (NRRRGKTRKQQEELQKQMVPLQASAQVKN).

This sequence belongs to the major facilitator (TC 2.A.1) superfamily. Organic cation transporter (TC 2.A.1.19) family. In terms of processing, glycosylated. Glycosylation is necessary for proper targeting of the transporter to the plasma membrane.

It localises to the basolateral cell membrane. The protein localises to the basal cell membrane. It carries out the reaction (6R)-L-erythro-5,6,7,8-tetrahydrobiopterin(out) + a dicarboxylate(in) = (6R)-L-erythro-5,6,7,8-tetrahydrobiopterin(in) + a dicarboxylate(out). It catalyses the reaction L-erythro-7,8-dihydrobiopterin(out) + a dicarboxylate(in) = L-erythro-7,8-dihydrobiopterin(in) + a dicarboxylate(out). The catalysed reaction is L-sepiapterin(out) + a dicarboxylate(in) = L-sepiapterin(in) + a dicarboxylate(out). The enzyme catalyses prostaglandin F2alpha(out) + a dicarboxylate(in) = prostaglandin F2alpha(in) + a dicarboxylate(out). It carries out the reaction prostaglandin E2(out) + a dicarboxylate(in) = prostaglandin E2(in) + a dicarboxylate(out). It catalyses the reaction 3',5'-cyclic AMP(out) + a dicarboxylate(in) = 3',5'-cyclic AMP(in) + a dicarboxylate(out). The catalysed reaction is 3',5'-cyclic GMP(out) + a dicarboxylate(in) = 3',5'-cyclic GMP(in) + a dicarboxylate(out). The enzyme catalyses urate(out) + a dicarboxylate(in) = urate(in) + a dicarboxylate(out). It carries out the reaction kynurenate(out) + glutarate(in) = kynurenate(in) + glutarate(out). It catalyses the reaction (indol-3-yl)acetate(out) + a dicarboxylate(in) = (indol-3-yl)acetate(in) + a dicarboxylate(out). The catalysed reaction is indoxyl sulfate(out) + a dicarboxylate(in) = indoxyl sulfate(in) + a dicarboxylate(out). The enzyme catalyses N-benzoylglycine(out) + a dicarboxylate(in) = N-benzoylglycine(in) + a dicarboxylate(out). It carries out the reaction 3-carboxy-4-methyl-5-propyl-2-furanpropanoate(out) + a dicarboxylate(in) = 3-carboxy-4-methyl-5-propyl-2-furanpropanoate(in) + a dicarboxylate(out). Secondary active transporter that functions as a Na(+)-independent organic anion (OA)/dicarboxylate antiporter where the uptake of one molecule of OA into the cell is coupled with an efflux of one molecule of intracellular dicarboxylate such as 2-oxoglutarate or glutarate. Mediates the uptake of OA across the basolateral side of proximal tubule epithelial cells, thereby contributing to the renal elimination of endogenous OA from the systemic circulation into the urine. Functions as a biopterin transporters involved in the uptake and the secretion of coenzymes tetrahydrobiopterin (BH4), dihydrobiopterin (BH2) and sepiapterin to urine, thereby determining baseline levels of blood biopterins. Transports prostaglandin E2 (PGE2) and prostaglandin F2-alpha (PGF2-alpha) and may contribute to their renal excretion. Also mediates the uptake of cyclic nucleotides such as cAMP and cGMP. Involved in the transport of neuroactive tryptophan metabolites kynurenate (KYNA) and xanthurenate (XA) and may contribute to their secretion from the brain. May transport glutamate. Also involved in the disposition of uremic toxins and potentially toxic xenobiotics by the renal organic anion secretory pathway, helping reduce their undesired toxicological effects on the body. Uremic toxins include the indoxyl sulfate (IS), hippurate/N-benzoylglycine (HA), indole acetate (IA), 3-carboxy-4- methyl-5-propyl-2-furanpropionate (CMPF) and urate. Xenobiotics include the mycotoxin ochratoxin (OTA). May also contribute to the transport of organic compounds in testes across the blood-testis-barrier. This Bos taurus (Bovine) protein is Solute carrier family 22 member 6.